A 530-amino-acid polypeptide reads, in one-letter code: MSLKWTSVFLLIQLSCYFSSGSCGKVLVWPTEYSHWINMKTILEELVQRGHEVTVLTSSASTLVNASKSSAIKLEVYPTSLTKNYLEDSLLKILDRWIYGVSKNTFWSYFSQLQELCWEYYDYSNKLCKDAVLNKKLMMKLQESKFDVILADALNPCGELLAELFNIPFLYSLRFSVGYTFEKNGGGFLFPPSYVPVVMSELSDQMIFMERIKNMIHMLYFDFWFQIYDLKKWDQFYSEVLGRPTTLFETMGKAEMWLIRTYWDFEFPRPFLPNVDFVGGLHCKPAKPLPKEMEEFVQSSGENGIVVFSLGSMISNMSEESANMIASALAQIPQKVLWRFDGKKPNTLGSNTRLYKWLPQNDLLGHPKTKAFITHGGTNGIYEAIYHGIPMVGIPLFADQHDNIAHMKAKGAALSVDIRTMSSRDLLNALKSVINDPVYKENVMKLSRIHHDQPMKPLDRAVFWIEFVMRHKGAKHLRVAAHNLTWIQYHSLDVIAFLLACVATVIFIITKFCLFCFRKLAKKGKKKKRD.

The signal sequence occupies residues 1 to 23 (MSLKWTSVFLLIQLSCYFSSGSC). Asparagine 65 carries an N-linked (GlcNAc...) asparagine glycan. Lysine 136 bears the N6-succinyllysine mark. N-linked (GlcNAc...) asparagine glycans are attached at residues asparagine 316 and asparagine 483. A helical membrane pass occupies residues 495-515 (IAFLLACVATVIFIITKFCLF).

It belongs to the UDP-glycosyltransferase family. As to expression, expressed in many tissues. Present in liver, prostate and testis.

Its subcellular location is the endoplasmic reticulum membrane. The enzyme catalyses glucuronate acceptor + UDP-alpha-D-glucuronate = acceptor beta-D-glucuronoside + UDP + H(+). It carries out the reaction 17alpha-estradiol + UDP-alpha-D-glucuronate = 17alpha-estradiol 3-O-(beta-D-glucuronate) + UDP + H(+). It catalyses the reaction 16alpha,17alpha-estriol + UDP-alpha-D-glucuronate = 16alpha,17alpha-estriol 3-O-(beta-D-glucuronate) + UDP + H(+). The catalysed reaction is 17beta-hydroxy-5alpha-androstan-3-one + UDP-alpha-D-glucuronate = 5alpha-dihydrotestosterone 17-O-(beta-D-glucuronate) + UDP + H(+). In terms of biological role, UDP-glucuronosyltransferase (UGT) that catalyzes phase II biotransformation reactions in which lipophilic substrates are conjugated with glucuronic acid to increase the metabolite's water solubility, thereby facilitating excretion into either the urine or bile. Essential for the elimination and detoxification of drugs, xenobiotics and endogenous compounds. Catalyzes the glucuronidation of endogenous steroid hormones such as androgens (testosterone, androsterone) and estrogens (estradiol, epiestradiol, estriol, catechol estrogens). Displays glucuronidation activity toward several classes of xenobiotic substrates, including phenolic compounds (eugenol, 4-nitrophenol, 4-hydroxybiphenyl) and phenylpropanoids (naringenin, coumarins). Catalyzes the glucuronidation of monoterpenoid alcohols such as borneol, menthol and isomenthol, a class of natural compounds used in essential oils. The sequence is that of UDP-glucuronosyltransferase 2B15 from Homo sapiens (Human).